The primary structure comprises 440 residues: Murein DD-endopeptidase MepM (440 aa).

Residues 21–40 (VMLGSLTVLTLAVAVWRPYV) form a helical membrane-spanning segment. The LysM domain maps to 96-141 (HEYVVSTGDTLSSILNQYGIDMGDITQLAAADKELRNLKIGQQLSW). Histidine 314 is a Zn(2+) binding site.

This sequence belongs to the peptidase M23B family. It depends on Zn(2+) as a cofactor.

The protein resides in the cell membrane. The protein operates within cell wall biogenesis; cell wall polysaccharide biosynthesis. A murein DD-endopeptidase with specificity for D-Ala-meso-diaminopimelic acid (mDAP) cross-links. Its role is probably to cleave D-Ala-mDAP cross-links to allow insertion of new glycans and thus cell wall expansion. Functionally redundant with MepM and MepH. The chain is Murein DD-endopeptidase MepM (mepM) from Escherichia coli O6:H1 (strain CFT073 / ATCC 700928 / UPEC).